The following is a 3112-amino-acid chain: Genome polyprotein (3112 aa).

The region spanning 234–383 (KLTQRRANKI…PDCLEGLTYY (150 aa)) is the Peptidase S30 domain. Active-site for P1 proteinase activity residues include H286, D301, and S333. One can recognise a Peptidase C6 domain in the interval 729-850 (TLVPKSGFCY…IETFKDYRIG (122 aa)). Catalysis depends on for helper component proteinase activity residues C737 and H809. A Helicase ATP-binding domain is found at 1278–1429 (NIATGAGNEF…CVPTNHKVDV (152 aa)). 1291-1298 (GDVGSGKS) is an ATP binding site. The DECH box signature appears at 1379–1382 (DECH). Residues 1444 to 1627 (SIDSHAEGLR…EVNFVTREQV (184 aa)) enclose the Helicase C-terminal domain. Positions 2096–2311 (DDNYVPHSRC…ISWKGVPTNM (216 aa)) constitute a Peptidase C4 domain. Catalysis depends on for nuclear inclusion protein A activity residues H2140, D2174, and C2243. The RdRp catalytic domain maps to 2569–2687 (WKFIDADGSR…NAPQGVCETI (119 aa)). Positions 2818 to 2867 (HSGADQSGVVKDQTGDKAEGSGTKTEDPPNQTTDPVNNPSNGGNKDAPQN) are disordered. Residues 2830 to 2844 (QTGDKAEGSGTKTED) show a composition bias toward basic and acidic residues. Residues 2845-2867 (PPNQTTDPVNNPSNGGNKDAPQN) show a composition bias toward polar residues.

This sequence belongs to the potyviridae genome polyprotein family. VPg is uridylylated by the polymerase and is covalently attached to the 5'-end of the genomic RNA. This uridylylated form acts as a nucleotide-peptide primer for the polymerase. Post-translationally, genome polyprotein of potyviruses undergoes post-translational proteolytic processing by the main proteinase NIa-pro resulting in the production of at least ten individual proteins. The P1 proteinase and the HC-pro cleave only their respective C-termini autocatalytically. 6K1 is essential for proper proteolytic separation of P3 from CI.

It localises to the host cytoplasmic vesicle. The protein localises to the virion. The enzyme catalyses RNA(n) + a ribonucleoside 5'-triphosphate = RNA(n+1) + diphosphate. The catalysed reaction is Hydrolyzes glutaminyl bonds, and activity is further restricted by preferences for the amino acids in P6 - P1' that vary with the species of potyvirus, e.g. Glu-Xaa-Xaa-Tyr-Xaa-Gln-|-(Ser or Gly) for the enzyme from tobacco etch virus. The natural substrate is the viral polyprotein, but other proteins and oligopeptides containing the appropriate consensus sequence are also cleaved.. It catalyses the reaction Hydrolyzes a Gly-|-Gly bond at its own C-terminus, commonly in the sequence -Tyr-Xaa-Val-Gly-|-Gly, in the processing of the potyviral polyprotein.. Its function is as follows. Required for aphid transmission and also has proteolytic activity. Only cleaves a Gly-Gly dipeptide at its own C-terminus. Interacts with virions and aphid stylets. Acts as a suppressor of RNA-mediated gene silencing, also known as post-transcriptional gene silencing (PTGS), a mechanism of plant viral defense that limits the accumulation of viral RNAs. May have RNA-binding activity. Functionally, has helicase activity. It may be involved in replication. Indispensable for virus replication. In terms of biological role, mediates the cap-independent, EIF4E-dependent translation of viral genomic RNAs. Binds to the cap-binding site of host EIF4E and thus interferes with the host EIF4E-dependent mRNA export and translation. VPg-RNA directly binds EIF4E and is a template for transcription. Also forms trimeric complexes with EIF4E-EIF4G, which are templates for translation. Its function is as follows. Has RNA-binding and proteolytic activities. Functionally, an RNA-dependent RNA polymerase that plays an essential role in the virus replication. Involved in aphid transmission, cell-to-cell and systemis movement, encapsidation of the viral RNA and in the regulation of viral RNA amplification. The chain is Genome polyprotein from Triticum aestivum (Wheat).